The chain runs to 428 residues: Methyl-branched lipid omega-hydroxylase (428 aa).

Cys379 provides a ligand contact to heme.

This sequence belongs to the cytochrome P450 family. It depends on heme as a cofactor.

The catalysed reaction is a methyl-branched lipid + O2 + 2 reduced ferredoxin [iron-sulfur] cluster + 2 H(+) = an omega-hydroxy-methyl-branched lipid + H2O + 2 oxidized ferredoxin [iron-sulfur] cluster.. It catalyses the reaction cholest-4-en-3-one + 6 reduced [2Fe-2S]-[ferredoxin] + 3 O2 + 5 H(+) = (25R)-3-oxocholest-4-en-26-oate + 6 oxidized [2Fe-2S]-[ferredoxin] + 4 H2O. The protein operates within lipid metabolism; branched-chain fatty acid metabolism. In terms of biological role, primarily hydroxylates the omega-carbon of a number of methyl-branched lipids, including (2E,6E)-farnesol, phytanate, geranylgeraniol, 15-methylpalmitate and (2E,6E)-farnesyl diphosphate. Also catalyzes the sequential oxidation of the terminal methyl of cholest-4-en-3-one into (25R)-26-hydroxycholest-4-en-3-one (alcohol), (25R)-26-oxocholest-4-en-3-one (aldehyde), to finally yield the carboxylic acid (25R)-3-oxocholest-4-en-26-oate. Also able to sequentially oxidize cholesterol itself, not only cholest-4-en-3-one. The chain is Methyl-branched lipid omega-hydroxylase (cyp124) from Mycobacterium tuberculosis (strain CDC 1551 / Oshkosh).